The chain runs to 291 residues: 33 kDa chaperonin (291 aa).

2 disulfide bridges follow: C237-C239 and C270-C273.

It belongs to the HSP33 family. Under oxidizing conditions two disulfide bonds are formed involving the reactive cysteines. Under reducing conditions zinc is bound to the reactive cysteines and the protein is inactive.

Its subcellular location is the cytoplasm. In terms of biological role, redox regulated molecular chaperone. Protects both thermally unfolding and oxidatively damaged proteins from irreversible aggregation. Plays an important role in the bacterial defense system toward oxidative stress. The protein is 33 kDa chaperonin of Bacillus mycoides (strain KBAB4) (Bacillus weihenstephanensis).